Consider the following 133-residue polypeptide: ATP synthase epsilon chain, chloroplastic (133 aa).

It belongs to the ATPase epsilon chain family. As to quaternary structure, F-type ATPases have 2 components, CF(1) - the catalytic core - and CF(0) - the membrane proton channel. CF(1) has five subunits: alpha(3), beta(3), gamma(1), delta(1), epsilon(1). CF(0) has three main subunits: a, b and c.

Its subcellular location is the plastid. It localises to the chloroplast thylakoid membrane. In terms of biological role, produces ATP from ADP in the presence of a proton gradient across the membrane. This is ATP synthase epsilon chain, chloroplastic from Cyanidium caldarium (Red alga).